The sequence spans 695 residues: UvrABC system protein B (695 aa).

The region spanning 25–176 (KSILEGHRFQ…NQREVLRDLA (152 aa)) is the Helicase ATP-binding domain. 38 to 45 (GATGTGKT) lines the ATP pocket. A Beta-hairpin motif is present at residues 91–114 (YYDYYQPEAYVPSTDTYIAKSSSI). Residues 454–617 (LLGEIYLRLE…ITPKPIIKKN (164 aa)) form the Helicase C-terminal domain. The 36-residue stretch at 652-687 (PELIGQLELKMKAAAKNLEFEEAAQLRDQIKKLRQR) folds into the UVR domain.

Belongs to the UvrB family. In terms of assembly, forms a heterotetramer with UvrA during the search for lesions. Interacts with UvrC in an incision complex.

The protein localises to the cytoplasm. In terms of biological role, the UvrABC repair system catalyzes the recognition and processing of DNA lesions. A damage recognition complex composed of 2 UvrA and 2 UvrB subunits scans DNA for abnormalities. Upon binding of the UvrA(2)B(2) complex to a putative damaged site, the DNA wraps around one UvrB monomer. DNA wrap is dependent on ATP binding by UvrB and probably causes local melting of the DNA helix, facilitating insertion of UvrB beta-hairpin between the DNA strands. Then UvrB probes one DNA strand for the presence of a lesion. If a lesion is found the UvrA subunits dissociate and the UvrB-DNA preincision complex is formed. This complex is subsequently bound by UvrC and the second UvrB is released. If no lesion is found, the DNA wraps around the other UvrB subunit that will check the other stand for damage. The chain is UvrABC system protein B from Synechococcus sp. (strain JA-3-3Ab) (Cyanobacteria bacterium Yellowstone A-Prime).